The primary structure comprises 232 residues: TIR domain-containing adapter molecule 2 (232 aa).

The segment covering 1–10 (MGIGKSKMDP) has biased composition (basic and acidic residues). Positions 1-71 (MGIGKSKMDP…VEERPEEDTE (71 aa)) are disordered. Gly2 is lipidated: N-myristoyl glycine. The segment covering 19–29 (KSQSVDTSQSH) has biased composition (polar residues). Residues 30 to 42 (HMSDSKQSEEISL) show a composition bias toward basic and acidic residues. The span at 55–71 (PAEEQEGVEERPEEDTE) shows a compositional bias: acidic residues. The 157-residue stretch at 70-226 (TEEEVFLKFV…AIWKETRNTV (157 aa)) folds into the TIR domain. Tyr164 is modified (phosphotyrosine).

As to quaternary structure, homodimer. Interacts with TLR4, TICAM1, IRF3 and IRF7 in response to LPS. Interacts with IL1R1, IL1RAP, IRAK2, IRAK3 and TRAF6. Interacts with protein kinase-inactive mutants of IRAK1 and IRAK4. Isoform 1 interacts with isoform 2; the interaction occurs in late endosomes and disrupts the interaction between isoform 1 and TICAM1. Interacts with MYD88; the interaction decreases after IL-18 stimulation in a time-dependent manner. Interacts with IL18R1 and IL18RAP. Interacts with TLR2. Interacts with RAB11FIP2. Myristoylated. Required for membrane association which is critical for its ability to initiate efficient signaling. In terms of processing, phosphorylated by PRKCE in response to LPS. Phosphorylation is essential for its function. It is depleted from the membrane upon phosphorylation. Tyrosine phosphorylation is inhibited by phosphatase PTPN4.

It is found in the cytoplasm. The protein resides in the golgi apparatus. It localises to the cell membrane. Its subcellular location is the endoplasmic reticulum. The protein localises to the early endosome. It is found in the late endosome. The protein resides in the cell projection. It localises to the phagocytic cup. In terms of biological role, functions as a sorting adapter in different signaling pathways to facilitate downstream signaling leading to type I interferon induction. In TLR4 signaling, physically bridges TLR4 and TICAM1 and functionally transmits signal to TICAM1 in early endosomes after endocytosis of TLR4. In TLR2 signaling, physically bridges TLR2 and MYD88 and is required for the TLR2-dependent movement of MYD88 to endosomes following ligand engagement. Involved in IL-18 signaling and is proposed to function as a sorting adapter for MYD88 in IL-18 signaling during adaptive immune response. Forms a complex with RAB11FIP2 that is recruited to the phagosomes to promote the activation of the actin-regulatory GTPases RAC1 and CDC42 and subsequent phagocytosis of Gram-negative bacteria. This is TIR domain-containing adapter molecule 2 (TICAM2) from Bos taurus (Bovine).